The primary structure comprises 337 residues: Lipoyl synthase (337 aa).

Positions 81, 86, 92, 107, 111, 114, and 323 each coordinate [4Fe-4S] cluster. Residues 93–312 (FSHGTATFMI…EDYGNALGFS (220 aa)) form the Radical SAM core domain.

Belongs to the radical SAM superfamily. Lipoyl synthase family. It depends on [4Fe-4S] cluster as a cofactor.

It localises to the cytoplasm. It catalyses the reaction [[Fe-S] cluster scaffold protein carrying a second [4Fe-4S](2+) cluster] + N(6)-octanoyl-L-lysyl-[protein] + 2 oxidized [2Fe-2S]-[ferredoxin] + 2 S-adenosyl-L-methionine + 4 H(+) = [[Fe-S] cluster scaffold protein] + N(6)-[(R)-dihydrolipoyl]-L-lysyl-[protein] + 4 Fe(3+) + 2 hydrogen sulfide + 2 5'-deoxyadenosine + 2 L-methionine + 2 reduced [2Fe-2S]-[ferredoxin]. It functions in the pathway protein modification; protein lipoylation via endogenous pathway; protein N(6)-(lipoyl)lysine from octanoyl-[acyl-carrier-protein]: step 2/2. In terms of biological role, catalyzes the radical-mediated insertion of two sulfur atoms into the C-6 and C-8 positions of the octanoyl moiety bound to the lipoyl domains of lipoate-dependent enzymes, thereby converting the octanoylated domains into lipoylated derivatives. The polypeptide is Lipoyl synthase (Xanthomonas euvesicatoria pv. vesicatoria (strain 85-10) (Xanthomonas campestris pv. vesicatoria)).